The primary structure comprises 590 residues: V-type ATP synthase alpha chain (590 aa).

ATP is bound at residue 231–238; sequence GPFGSGKT.

The protein belongs to the ATPase alpha/beta chains family.

The enzyme catalyses ATP + H2O + 4 H(+)(in) = ADP + phosphate + 5 H(+)(out). Functionally, produces ATP from ADP in the presence of a proton gradient across the membrane. The V-type alpha chain is a catalytic subunit. The protein is V-type ATP synthase alpha chain of Clostridium botulinum (strain ATCC 19397 / Type A).